Consider the following 458-residue polypeptide: Argininosuccinate lyase (458 aa).

It belongs to the lyase 1 family. Argininosuccinate lyase subfamily.

It is found in the cytoplasm. It catalyses the reaction 2-(N(omega)-L-arginino)succinate = fumarate + L-arginine. The protein operates within amino-acid biosynthesis; L-arginine biosynthesis; L-arginine from L-ornithine and carbamoyl phosphate: step 3/3. The protein is Argininosuccinate lyase of Acetivibrio thermocellus (strain ATCC 27405 / DSM 1237 / JCM 9322 / NBRC 103400 / NCIMB 10682 / NRRL B-4536 / VPI 7372) (Clostridium thermocellum).